The following is a 423-amino-acid chain: Glutamate-1-semialdehyde 2,1-aminomutase (423 aa).

Lysine 262 carries the post-translational modification N6-(pyridoxal phosphate)lysine.

The protein belongs to the class-III pyridoxal-phosphate-dependent aminotransferase family. HemL subfamily. The cofactor is pyridoxal 5'-phosphate.

The protein localises to the cytoplasm. The catalysed reaction is (S)-4-amino-5-oxopentanoate = 5-aminolevulinate. It functions in the pathway porphyrin-containing compound metabolism; protoporphyrin-IX biosynthesis; 5-aminolevulinate from L-glutamyl-tRNA(Glu): step 2/2. In Methanosphaera stadtmanae (strain ATCC 43021 / DSM 3091 / JCM 11832 / MCB-3), this protein is Glutamate-1-semialdehyde 2,1-aminomutase.